The primary structure comprises 233 residues: 3,4-dihydroxy-2-butanone 4-phosphate synthase (233 aa).

E37 provides a ligand contact to Mg(2+). E37 is a Mn(2+) binding site. D41 contacts D-ribulose 5-phosphate. C66 is subject to S-glutathionyl cysteine. Residues T92 and 150 to 154 (RRGHT) each bind D-ribulose 5-phosphate. H153 is a Mg(2+) binding site. Residue H153 coordinates Mn(2+).

In terms of assembly, homodimer. Mg(2+) serves as cofactor. The cofactor is Mn(2+). In terms of processing, S-glutathionylation is reversible and dependent on a glutaredoxin.

The catalysed reaction is D-ribulose 5-phosphate = (2S)-2-hydroxy-3-oxobutyl phosphate + formate + H(+). Its pathway is cofactor biosynthesis; riboflavin biosynthesis; 2-hydroxy-3-oxobutyl phosphate from D-ribulose 5-phosphate: step 1/1. Catalyzes the conversion of D-ribulose 5-phosphate to formate and 3,4-dihydroxy-2-butanone 4-phosphate. This Pyricularia oryzae (strain 70-15 / ATCC MYA-4617 / FGSC 8958) (Rice blast fungus) protein is 3,4-dihydroxy-2-butanone 4-phosphate synthase (RIB3).